A 1363-amino-acid chain; its full sequence is Xanthine dehydrogenase (1363 aa).

The 87-residue stretch at 35–121 folds into the 2Fe-2S ferredoxin-type domain; that stretch reads DTIRFYLNGT…GKHVITVEGI (87 aa). Positions 73, 78, 81, 103, 142, 145, 177, and 179 each coordinate [2Fe-2S] cluster. The 185-residue stretch at 266 to 450 folds into the FAD-binding PCMH-type domain; that stretch reads FGNKRKKWYR…SSLRIPTASE (185 aa). FAD is bound by residues 294–301, F374, 384–388, D397, and K459; these read LIGGSTET and SPAGN. Mo-molybdopterin contacts are provided by Q798 and F829. Positions 833 and 911 each coordinate substrate. R943 lines the Mo-molybdopterin pocket. 2 residues coordinate substrate: F945 and T1041. Position 1110 (A1110) interacts with Mo-molybdopterin. E1295 functions as the Proton acceptor in the catalytic mechanism.

Belongs to the xanthine dehydrogenase family. The cofactor is FAD. Mo-molybdopterin is required as a cofactor. Requires [2Fe-2S] cluster as cofactor.

The protein resides in the peroxisome. The catalysed reaction is xanthine + NAD(+) + H2O = urate + NADH + H(+). It carries out the reaction hypoxanthine + NAD(+) + H2O = xanthine + NADH + H(+). Key enzyme in purine degradation. Catalyzes the oxidation of hypoxanthine to xanthine. Catalyzes the oxidation of xanthine to uric acid. The protein is Xanthine dehydrogenase (hxA) of Emericella nidulans (strain FGSC A4 / ATCC 38163 / CBS 112.46 / NRRL 194 / M139) (Aspergillus nidulans).